We begin with the raw amino-acid sequence, 262 residues long: Cytochrome c oxidase subunit 3 (262 aa).

The next 6 helical transmembrane spans lie at 39 to 59, 83 to 103, 120 to 140, 163 to 183, 198 to 218, and 240 to 260; these read YDIS…YQWW, GMIL…WAFF, MGII…ILLA, GLFF…YEYI, FFMA…FLLV, and AWYW…IYWW.

It belongs to the cytochrome c oxidase subunit 3 family. In terms of assembly, component of the cytochrome c oxidase (complex IV, CIV), a multisubunit enzyme composed of a catalytic core of 3 subunits and several supernumerary subunits. The complex exists as a monomer or a dimer and forms supercomplexes (SCs) in the inner mitochondrial membrane with ubiquinol-cytochrome c oxidoreductase (cytochrome b-c1 complex, complex III, CIII).

The protein localises to the mitochondrion inner membrane. It catalyses the reaction 4 Fe(II)-[cytochrome c] + O2 + 8 H(+)(in) = 4 Fe(III)-[cytochrome c] + 2 H2O + 4 H(+)(out). Component of the cytochrome c oxidase, the last enzyme in the mitochondrial electron transport chain which drives oxidative phosphorylation. The respiratory chain contains 3 multisubunit complexes succinate dehydrogenase (complex II, CII), ubiquinol-cytochrome c oxidoreductase (cytochrome b-c1 complex, complex III, CIII) and cytochrome c oxidase (complex IV, CIV), that cooperate to transfer electrons derived from NADH and succinate to molecular oxygen, creating an electrochemical gradient over the inner membrane that drives transmembrane transport and the ATP synthase. Cytochrome c oxidase is the component of the respiratory chain that catalyzes the reduction of oxygen to water. Electrons originating from reduced cytochrome c in the intermembrane space (IMS) are transferred via the dinuclear copper A center (CU(A)) of subunit 2 and heme A of subunit 1 to the active site in subunit 1, a binuclear center (BNC) formed by heme A3 and copper B (CU(B)). The BNC reduces molecular oxygen to 2 water molecules using 4 electrons from cytochrome c in the IMS and 4 protons from the mitochondrial matrix. This chain is Cytochrome c oxidase subunit 3 (mt:CoIII), found in Drosophila melanogaster (Fruit fly).